A 624-amino-acid chain; its full sequence is MAKKKLNSTIKRSRTRSGCVTCRDRHIKCDEQQPVCKNCQKSNRKCYRGIRLNFTQYTFYNPDDNKPKELQQNEQPNSSHYAFPNLEPNPVSQKHRILDQSITIASLYDDLKKYKPYIHLHTPEDLRESDLQFQEDTYNSYISTSAINLRGKKLTKRDPGLSTSLSVINPTLESEIKPNPVILNQLSFHPPPNLNTGVLYPPTATAATTTTSSPTNHHLHPYFVSSIPNPQHHPMLDTSQHQETTSTDPNQFDYSHLSMPQSTPLLMKYDITTYVRLIETEKYYMLLDLANELDIWKKIIPSLCLQISENDSFLLDCLMSCSRNTSVNLLDLTNEQLNKWSQLKNAPVISERIQQFEHILISIVLILLGLYLNTTKVRLTDYHKVIFNNQAKLFSHVLRKIHTFITSNKPNSAVLTNAIQSITMLKFFIDKNYDFSYEFKNIQKGRVTDTSEEITYSNSNLYSNPDISYISTFNEYEIIYLNNSYQNLVHVDQSNSMSMGESQLYKDLLWYLMKVDFVINYPEAANNLVLDHNVVYQQITNASTDLSFSNNLNYLNPRSYANYFLKEFIIKVLSMGSNAIIEDANNRINTLFNFIDQSYMDPELKSQFHHCFTWTVRYIHPVSD.

Positions 19–46 form a DNA-binding region, zn(2)-C6 fungal-type; the sequence is CVTCRDRHIKCDEQQPVCKNCQKSNRKC. Disordered stretches follow at residues 63–84 and 230–250; these read DDNK…YAFP and PQHH…TDPN. Polar residues predominate over residues 237–250; that stretch reads DTSQHQETTSTDPN.

Interacts with MCM1.

The protein resides in the nucleus. In terms of biological role, transcription factor that binds the promoters of genes involved in biofilm formation, which include several key adhesion genes, and recruits MCM1 to these sites. Plays an important role in hyphal growth and virulence. Promotes conversion of opaque cells to white phase, but needs existence of EFG1, a key regulator required for maintenance of the white state. This is Adhesion and hyphal regulator 1 (AHR1) from Candida albicans (strain SC5314 / ATCC MYA-2876) (Yeast).